A 452-amino-acid polypeptide reads, in one-letter code: Photoreceptor ankyrin repeat protein (452 aa).

4 ANK repeats span residues 94–123 (CRLGALYWACVHNDPTQLQAILDGGVSPEE), 130–160 (NGRTGLMVACYHGFQSVVALLSHCPFLDVNQ), 164–193 (GGDTALMLAAQAGHVPLVSLLLNYYVGLDL), and 223–257 (RGKTALEWAVLTDSFDTVWRIRQLLRRPQVEQLSQ). Disordered regions lie at residues 335-369 (LGTRSKSVPELLGTAPPPPLVPQSPPGSPQRSPWV) and 405-427 (SKASSSSHQCQPKPSPSGHQSLA). Positions 349–362 (APPPPLVPQSPPGS) are enriched in pro residues. Residues 406–424 (KASSSSHQCQPKPSPSGHQ) are compositionally biased toward polar residues.

The protein resides in the cytoplasm. The protein localises to the cytosol. Its subcellular location is the nucleus. Acts as a transcriptional repressor for CRX-activated photoreceptor gene regulation. This chain is Photoreceptor ankyrin repeat protein, found in Homo sapiens (Human).